Reading from the N-terminus, the 52-residue chain is Conotoxin Cal6.3b (52 aa).

A propeptide spanning residues 1–4 (KKKR) is cleaved from the precursor. 3 cysteine pairs are disulfide-bonded: cysteine 12–cysteine 23, cysteine 15–cysteine 27, and cysteine 22–cysteine 30. Glutamine amide is present on glutamine 50.

In terms of tissue distribution, expressed by the venom duct.

It localises to the secreted. Functionally, probable neurotoxin with unknown target. Possibly targets ion channels. This Californiconus californicus (California cone) protein is Conotoxin Cal6.3b.